We begin with the raw amino-acid sequence, 363 residues long: Photosystem II protein D1 1 (363 aa).

A run of 3 helical transmembrane segments spans residues 32 to 49, 121 to 136, and 145 to 159; these read YVGW…VSAI, HFLI…QWEL, and WIAM…AATA. A chlorophyll a-binding site is contributed by histidine 121. Tyrosine 129 serves as a coordination point for pheophytin a. 2 residues coordinate [CaMn4O5] cluster: glutamate 173 and glutamate 192. A helical membrane pass occupies residues 200-221; that stretch reads FHMLGVVGVFGGAFLSAMHGSL. Histidine 201 is a binding site for chlorophyll a. A quinone is bound by residues histidine 218 and 268–269; that span reads AF. Histidine 218 is a Fe cation binding site. Histidine 276 contacts Fe cation. A helical membrane pass occupies residues 278 to 292; sequence LLAVLPTIGIWFAAL. Histidine 336 and alanine 348 together coordinate [CaMn4O5] cluster. Residues 349 to 363 constitute a propeptide that is removed on maturation; sequence STESKEIPTIPIMTS.

Belongs to the reaction center PufL/M/PsbA/D family. As to quaternary structure, PSII is composed of 1 copy each of membrane proteins PsbA, PsbB, PsbC, PsbD, PsbE, PsbF, PsbH, PsbI, PsbJ, PsbK, PsbL, PsbM, PsbT, PsbX, PsbY, PsbZ, Psb30/Ycf12, peripheral proteins PsbO, CyanoQ (PsbQ), PsbU, PsbV and a large number of cofactors. It forms dimeric complexes. It depends on The D1/D2 heterodimer binds P680, chlorophylls that are the primary electron donor of PSII, and subsequent electron acceptors. It shares a non-heme iron and each subunit binds pheophytin, quinone, additional chlorophylls, carotenoids and lipids. D1 provides most of the ligands for the Mn4-Ca-O5 cluster of the oxygen-evolving complex (OEC). There is also a Cl(-1) ion associated with D1 and D2, which is required for oxygen evolution. The PSII complex binds additional chlorophylls, carotenoids and specific lipids. as a cofactor. Tyr-164 forms a radical intermediate that is referred to as redox-active TyrZ, YZ or Y-Z. Post-translationally, C-terminally processed by CtpA; processing is essential to allow assembly of the oxygen-evolving complex and thus photosynthetic growth.

The protein localises to the cellular thylakoid membrane. It catalyses the reaction 2 a plastoquinone + 4 hnu + 2 H2O = 2 a plastoquinol + O2. Functionally, photosystem II (PSII) is a light-driven water:plastoquinone oxidoreductase that uses light energy to abstract electrons from H(2)O, generating O(2) and a proton gradient subsequently used for ATP formation. It consists of a core antenna complex that captures photons, and an electron transfer chain that converts photonic excitation into a charge separation. The D1/D2 (PsbA/PsbD) reaction center heterodimer binds P680, the primary electron donor of PSII as well as several subsequent electron acceptors. This is Photosystem II protein D1 1 from Acaryochloris marina (strain MBIC 11017).